The sequence spans 313 residues: Ornithine carbamoyltransferase (313 aa).

Carbamoyl phosphate is bound by residues 57 to 60 (STRT), glutamine 84, arginine 108, and 135 to 138 (HPTQ). Residues asparagine 167, aspartate 231, and 235 to 236 (SM) each bind L-ornithine. Carbamoyl phosphate contacts are provided by residues 272–273 (CL) and arginine 300.

It belongs to the aspartate/ornithine carbamoyltransferase superfamily. OTCase family.

Its subcellular location is the cytoplasm. The enzyme catalyses carbamoyl phosphate + L-ornithine = L-citrulline + phosphate + H(+). Its pathway is amino-acid biosynthesis; L-arginine biosynthesis; L-arginine from L-ornithine and carbamoyl phosphate: step 1/3. Reversibly catalyzes the transfer of the carbamoyl group from carbamoyl phosphate (CP) to the N(epsilon) atom of ornithine (ORN) to produce L-citrulline. This chain is Ornithine carbamoyltransferase, found in Pseudothermotoga lettingae (strain ATCC BAA-301 / DSM 14385 / NBRC 107922 / TMO) (Thermotoga lettingae).